The sequence spans 352 residues: Probable dual-specificity RNA methyltransferase RlmN (352 aa).

Glu93 acts as the Proton acceptor in catalysis. The 234-residue stretch at 99–332 (TAKRLTVCVS…ATVRQTRGLD (234 aa)) folds into the Radical SAM core domain. A disulfide bridge links Cys106 with Cys337. The [4Fe-4S] cluster site is built by Cys113, Cys117, and Cys120. S-adenosyl-L-methionine is bound by residues 160–161 (GE), Ser190, 213–215 (SLH), and Asn294. Catalysis depends on Cys337, which acts as the S-methylcysteine intermediate.

It belongs to the radical SAM superfamily. RlmN family. The cofactor is [4Fe-4S] cluster.

Its subcellular location is the cytoplasm. The catalysed reaction is adenosine(2503) in 23S rRNA + 2 reduced [2Fe-2S]-[ferredoxin] + 2 S-adenosyl-L-methionine = 2-methyladenosine(2503) in 23S rRNA + 5'-deoxyadenosine + L-methionine + 2 oxidized [2Fe-2S]-[ferredoxin] + S-adenosyl-L-homocysteine. The enzyme catalyses adenosine(37) in tRNA + 2 reduced [2Fe-2S]-[ferredoxin] + 2 S-adenosyl-L-methionine = 2-methyladenosine(37) in tRNA + 5'-deoxyadenosine + L-methionine + 2 oxidized [2Fe-2S]-[ferredoxin] + S-adenosyl-L-homocysteine. Its function is as follows. Specifically methylates position 2 of adenine 2503 in 23S rRNA and position 2 of adenine 37 in tRNAs. In Synechococcus sp. (strain JA-2-3B'a(2-13)) (Cyanobacteria bacterium Yellowstone B-Prime), this protein is Probable dual-specificity RNA methyltransferase RlmN.